We begin with the raw amino-acid sequence, 473 residues long: 3-isopropylmalate dehydratase large subunit (473 aa).

Residues Cys-354, Cys-414, and Cys-417 each coordinate [4Fe-4S] cluster.

This sequence belongs to the aconitase/IPM isomerase family. LeuC type 1 subfamily. Heterodimer of LeuC and LeuD. [4Fe-4S] cluster serves as cofactor.

The catalysed reaction is (2R,3S)-3-isopropylmalate = (2S)-2-isopropylmalate. The protein operates within amino-acid biosynthesis; L-leucine biosynthesis; L-leucine from 3-methyl-2-oxobutanoate: step 2/4. Catalyzes the isomerization between 2-isopropylmalate and 3-isopropylmalate, via the formation of 2-isopropylmaleate. The chain is 3-isopropylmalate dehydratase large subunit from Mycobacterium tuberculosis (strain CDC 1551 / Oshkosh).